Here is a 488-residue protein sequence, read N- to C-terminus: MKILMRADTHVSYSVPAEGPKANFTFSQVLAALSVSLCSLVVGFVSAYTSPALVSMTDRTITSFEVTKDAGSWVGGIMPLAALAGGITGGPLIEYLGRRTTILATAVPFIVSSLLIACAVNVIMILCGRFLTGFCVGIASLSLPVYLGETLQPEVRGTLGLLPTALGNIGILVCYVAGSFMNWSMLAFLGAALPVPFLILMIIIPETPRWFVNRGQEERARKALKWLRGKEADVEPELKDLMQSQAEADSQARRNTCLELFKRINLKPLSISLGLMFFQQFSGINAVIFYTVQIFKDAGSTIDSNLCTIIVGIVNFFATFMGILLIDRLGRKILLYISDIAMILTLSILGGFFYCKAHGPDVSHLGWLPLTCFVIYILGFSLGFGPIPWLMMGEILPAKIRGPAASVVTAFNWFCTFVVTKTFQDLTVAMGAHGAFWLFGVVCIVGLFFVIICVPETRGKSLEEIERKMMGRVPISAVVNIKPFSFNM.

Topologically, residues 1–28 are cytoplasmic; it reads MKILMRADTHVSYSVPAEGPKANFTFSQ. Residues 29 to 49 form a helical membrane-spanning segment; sequence VLAALSVSLCSLVVGFVSAYT. Over 50 to 72 the chain is Extracellular; that stretch reads SPALVSMTDRTITSFEVTKDAGS. The chain crosses the membrane as a helical span at residues 73–93; the sequence is WVGGIMPLAALAGGITGGPLI. Over 94-105 the chain is Cytoplasmic; sequence EYLGRRTTILAT. A helical membrane pass occupies residues 106–126; it reads AVPFIVSSLLIACAVNVIMIL. The Extracellular portion of the chain corresponds to 127–129; that stretch reads CGR. Residues 130 to 150 traverse the membrane as a helical segment; that stretch reads FLTGFCVGIASLSLPVYLGET. Residues 151 to 160 are Cytoplasmic-facing; it reads LQPEVRGTLG. Residues 161-181 form a helical membrane-spanning segment; that stretch reads LLPTALGNIGILVCYVAGSFM. Asparagine 182 is a glycosylation site (N-linked (GlcNAc...) asparagine). Topologically, residues 182-184 are extracellular; the sequence is NWS. Residues 185–205 form a helical membrane-spanning segment; the sequence is MLAFLGAALPVPFLILMIIIP. Topologically, residues 206-268 are cytoplasmic; it reads ETPRWFVNRG…ELFKRINLKP (63 aa). The chain crosses the membrane as a helical span at residues 269–289; that stretch reads LSISLGLMFFQQFSGINAVIF. At 290-305 the chain is on the extracellular side; the sequence is YTVQIFKDAGSTIDSN. The helical transmembrane segment at 306–326 threads the bilayer; that stretch reads LCTIIVGIVNFFATFMGILLI. Over 327–332 the chain is Cytoplasmic; sequence DRLGRK. The chain crosses the membrane as a helical span at residues 333-353; it reads ILLYISDIAMILTLSILGGFF. At 354 to 372 the chain is on the extracellular side; the sequence is YCKAHGPDVSHLGWLPLTC. The helical transmembrane segment at 373–393 threads the bilayer; that stretch reads FVIYILGFSLGFGPIPWLMMG. Residues 394–402 are Cytoplasmic-facing; it reads EILPAKIRG. The chain crosses the membrane as a helical span at residues 403 to 423; sequence PAASVVTAFNWFCTFVVTKTF. Over 424 to 433 the chain is Extracellular; it reads QDLTVAMGAH. Residues 434–454 traverse the membrane as a helical segment; it reads GAFWLFGVVCIVGLFFVIICV. The Cytoplasmic segment spans residues 455–488; sequence PETRGKSLEEIERKMMGRVPISAVVNIKPFSFNM.

Belongs to the major facilitator superfamily. Sugar transporter (TC 2.A.1.1) family. Trehalose transporter subfamily.

The protein resides in the cell membrane. Functionally, fails to transport trehalose. This chain is Facilitated trehalose transporter Tret1-2 homolog, found in Drosophila simulans (Fruit fly).